The following is a 310-amino-acid chain: Putative S-adenosyl-L-methionine-dependent methyltransferase MUL_2766 (310 aa).

Residues Asp-131 and 160–161 (DL) each bind S-adenosyl-L-methionine.

It belongs to the UPF0677 family.

In terms of biological role, exhibits S-adenosyl-L-methionine-dependent methyltransferase activity. The sequence is that of Putative S-adenosyl-L-methionine-dependent methyltransferase MUL_2766 from Mycobacterium ulcerans (strain Agy99).